The sequence spans 736 residues: Subtilisin-like protease SBT4.12 (736 aa).

The N-terminal stretch at 1-24 (MANLAASTCLYSWLLVLLLSSVSA) is a signal peptide. Residues 25–110 (IIDEDTQVYI…VFPNKILQLH (86 aa)) constitute a propeptide, activation peptide. The Inhibitor I9 domain maps to 32–110 (VYIVYMGSLS…VFPNKILQLH (79 aa)). One can recognise a Peptidase S8 domain in the interval 114–580 (SWDFMGVKEG…AGHVDPMAAL (467 aa)). The active-site Charge relay system is aspartate 142. Residue asparagine 173 is glycosylated (N-linked (GlcNAc...) asparagine). Histidine 197 (charge relay system) is an active-site residue. 3 N-linked (GlcNAc...) asparagine glycosylation sites follow: asparagine 220, asparagine 381, and asparagine 459. Residues 353–437 (KYPLVYGKSA…GLKAKDFKSL (85 aa)) form the PA domain. Serine 519 serves as the catalytic Charge relay system. 3 N-linked (GlcNAc...) asparagine glycosylation sites follow: asparagine 601, asparagine 649, and asparagine 659.

This sequence belongs to the peptidase S8 family. In terms of processing, the C-terminal propeptide is autocleaved. Specifically expressed in root stele of the root hair zone.

It is found in the secreted. This chain is Subtilisin-like protease SBT4.12, found in Arabidopsis thaliana (Mouse-ear cress).